Consider the following 576-residue polypeptide: Threonine dehydratase, mitochondrial (576 aa).

Lys109 is subject to N6-(pyridoxal phosphate)lysine. 2 ACT-like domains span residues 393 to 473 (VFML…DISD) and 495 to 566 (RIIS…DETD).

This sequence belongs to the serine/threonine dehydratase family. As to quaternary structure, homotetramer. Requires pyridoxal 5'-phosphate as cofactor.

The protein localises to the mitochondrion. The enzyme catalyses L-threonine = 2-oxobutanoate + NH4(+). It participates in amino-acid biosynthesis; L-isoleucine biosynthesis; 2-oxobutanoate from L-threonine: step 1/1. Its activity is regulated as follows. Isoleucine allosterically inhibits while valine allosterically activates this enzyme. The polypeptide is Threonine dehydratase, mitochondrial (ILV1) (Saccharomyces cerevisiae (strain ATCC 204508 / S288c) (Baker's yeast)).